Consider the following 255-residue polypeptide: Imidazole glycerol phosphate synthase subunit HisF (255 aa).

Residues aspartate 12 and aspartate 131 contribute to the active site.

It belongs to the HisA/HisF family. In terms of assembly, heterodimer of HisH and HisF.

It is found in the cytoplasm. It catalyses the reaction 5-[(5-phospho-1-deoxy-D-ribulos-1-ylimino)methylamino]-1-(5-phospho-beta-D-ribosyl)imidazole-4-carboxamide + L-glutamine = D-erythro-1-(imidazol-4-yl)glycerol 3-phosphate + 5-amino-1-(5-phospho-beta-D-ribosyl)imidazole-4-carboxamide + L-glutamate + H(+). It participates in amino-acid biosynthesis; L-histidine biosynthesis; L-histidine from 5-phospho-alpha-D-ribose 1-diphosphate: step 5/9. Functionally, IGPS catalyzes the conversion of PRFAR and glutamine to IGP, AICAR and glutamate. The HisF subunit catalyzes the cyclization activity that produces IGP and AICAR from PRFAR using the ammonia provided by the HisH subunit. The chain is Imidazole glycerol phosphate synthase subunit HisF from Vesicomyosocius okutanii subsp. Calyptogena okutanii (strain HA).